Reading from the N-terminus, the 67-residue chain is Nigrocin-2GRc (67 aa).

The first 22 residues, Met1 to Cys22, serve as a signal peptide directing secretion. Residues Glu23–Arg46 constitute a propeptide that is removed on maturation. Cys61 and Cys67 are disulfide-bonded.

Expressed by the skin glands.

It is found in the secreted. In terms of biological role, antimicrobial peptide active at least against the Gram-positive bacterium S.aureus but with otherwise unclear activity spectrum. Lacks hemolytic activity against rabbit or human erythrocytes. This chain is Nigrocin-2GRc, found in Odorrana grahami (Yunnanfu frog).